Here is a 224-residue protein sequence, read N- to C-terminus: UPF0441 protein ECA0329 (224 aa).

The tract at residues T180–G224 is disordered. Low complexity predominate over residues Q204–G224.

Belongs to the UPF0441 family.

This chain is UPF0441 protein ECA0329, found in Pectobacterium atrosepticum (strain SCRI 1043 / ATCC BAA-672) (Erwinia carotovora subsp. atroseptica).